The sequence spans 909 residues: MATIYVDGKEYEVDGADNLLQACLSLGLDVPYFCWHPALGSVGACRQCAVKQYQNADDKRGRLVMSCMTPSTDGTYISIEDEEAKEFRKCVVEWQMTNHPHDCPVCEEGGACHLQDMTVMTGHNSRRYRFTKRTHQNQDLGPFINHEMNRCIACYRCVRYYKDYAGGEDLGVYGAHDNVYFGRVEDGTLESEFSGNLVEVCPTGVFTDKTHSERYNRKWDMQFAPSICQQCSVGCNISPGERYGELRRIENRFHGSVNHYFLCDRGRFGYGYVNLPDRPRQPQLKNGNEQLAITVDGALNRAADALRNAKGVIGIGSPRASLESNFALRELVGANNFYVGVEQAEWQCQQQMLHILQHGGVPTPSLRDMEEADAILVLGEDVTMSAARIALSLRQAVKGKARELARKMKVDLWQVAAVQTLGQNQRYPLLITSLDTTRLDDVVEDKLHAPYADQARLGFAIANLLDPAAPAVTDLGAEQQAQAARWAELLGNAKKPLIIAGSSARSMALIEAASNIARALKGRGLEASIALVGQEANSLGLAMLASTSQPLEAALERIEAEEGLALVTVENDLYRRAARNRVDAALARLQHLLVIDHQATSTAQKADLVLPAASFAETDGTLVNMEGRAQRFFQVYAPAFYNADIQVREGWRWLAALQGTLEHKPLRWQTFDEISHACAASVPLLATMLEAAPNAGLRIRGMRLAREPHRYSGRTSMLANQNVSEPRVAQDPDSPFNFSMEGYAGSRQDMPQVPFAWAPGWNSPSAWNKFQDEVGGHLRAGDPGRRLLEATADTLDWFSAIPAPFKTADALQVVNYAQLFGGEELSARSPVIQARMSEPMLVLNPHDAARFALVEGGLVAFSWGGNHWRLPLRLSKKLSQGLVGLPLGVSGLPTALHQAYLANLQEAIA.

The 83-residue stretch at 1-83 folds into the 2Fe-2S ferredoxin-type domain; the sequence is MATIYVDGKE…GTYISIEDEE (83 aa). [2Fe-2S] cluster is bound by residues cysteine 34, cysteine 45, cysteine 48, and cysteine 67. Positions 83-122 constitute a 4Fe-4S His(Cys)3-ligated-type domain; the sequence is EAKEFRKCVVEWQMTNHPHDCPVCEEGGACHLQDMTVMTG. Histidine 99, cysteine 103, cysteine 106, cysteine 112, cysteine 151, cysteine 154, cysteine 157, cysteine 201, cysteine 228, cysteine 231, cysteine 235, and cysteine 263 together coordinate [4Fe-4S] cluster. The 4Fe-4S Mo/W bis-MGD-type domain maps to 221–277; the sequence is MQFAPSICQQCSVGCNISPGERYGELRRIENRFHGSVNHYFLCDRGRFGYGYVNLPD.

It belongs to the complex I 75 kDa subunit family. In terms of assembly, composed of 13 different subunits. Subunits NuoCD, E, F, and G constitute the peripheral sector of the complex. It depends on [2Fe-2S] cluster as a cofactor. [4Fe-4S] cluster is required as a cofactor.

The enzyme catalyses a quinone + NADH + 5 H(+)(in) = a quinol + NAD(+) + 4 H(+)(out). Its function is as follows. NDH-1 shuttles electrons from NADH, via FMN and iron-sulfur (Fe-S) centers, to quinones in the respiratory chain. The immediate electron acceptor for the enzyme in this species is believed to be ubiquinone. Couples the redox reaction to proton translocation (for every two electrons transferred, four hydrogen ions are translocated across the cytoplasmic membrane), and thus conserves the redox energy in a proton gradient. The protein is NADH-quinone oxidoreductase subunit G (nuoG) of Shewanella oneidensis (strain ATCC 700550 / JCM 31522 / CIP 106686 / LMG 19005 / NCIMB 14063 / MR-1).